The primary structure comprises 329 residues: DGAT1/2-independent enzyme synthesizing storage lipids (329 aa).

Topologically, residues 1–50 are lumenal; that stretch reads MIDNNQTCAAGQDSVPYVTCMIYVLEEWLGVEQLEDYLNFANHLLWVFTP. Residue asparagine 5 is glycosylated (N-linked (GlcNAc...) asparagine). A helical membrane pass occupies residues 51–71; that stretch reads LILLILPYFTIFLLYLTIIFL. Over 72–120 the chain is Cytoplasmic; that stretch reads HIYKRKNVLKEAYSHNLWDGARKTVATLWDGHAAVWHGYEVHGMEKIPE. The chain crosses the membrane as a helical span at residues 121–141; that stretch reads GAALIIFYHGAIPIDFYYFMA. The active site involves histidine 129. Residues 142-329 lie on the Lumenal side of the membrane; that stretch reads KIFIQKGRTC…DRFHKEQKAH (188 aa).

The protein belongs to the diacylglycerol acyltransferase family. Highly divergent. As to expression, widely expressed, with highest level in the brain, followed by lung and duodenum, and lowest levels in tongue, testis, skin and ileum.

The protein resides in the endoplasmic reticulum membrane. It carries out the reaction a 1,2-diacylglycerol + a 1,2-diacyl-sn-glycero-3-phosphocholine = a triacylglycerol + a 1-acyl-sn-glycero-3-phosphocholine. It catalyses the reaction a 1-O-alkyl-2-acyl-sn-glycero-3-phosphocholine + a 1,2-diacylglycerol = a 1-O-alkyl-sn-glycero-3-phosphocholine + a triacylglycerol. The enzyme catalyses a 2-acylglycerol + an acyl-CoA = a 1,2-diacylglycerol + CoA. The catalysed reaction is an acyl-CoA + a 1,2-diacyl-sn-glycerol = a triacyl-sn-glycerol + CoA. It carries out the reaction 2-(9Z-octadecenoyl)-glycerol + (9Z)-octadecenoyl-CoA = 1,2-di-(9Z-octadecenoyl)-glycerol + CoA. It catalyses the reaction 1,2-di-(9Z-octadecenoyl)-sn-glycerol + (9Z)-octadecenoyl-CoA = 1,2,3-tri-(9Z-octadecenoyl)-glycerol + CoA. With respect to regulation, acyltransferase activity is specifically inhibited by TMX1 at the endoplasmic reticulum, restricting accumulation of triacylglycerol. In terms of biological role, catalytic subunit of the alternative triglyceride biosynthesis pathway, which mediates formation of triacylglycerol from diacylglycerol and membrane phospholipids. Synthesizes triacylglycerol at the expense of membrane phospholipids, such as phosphatidylcholine (PC) and its ether-linked form (ePC), thereby altering the composition of membranes. The alternative triglyceride biosynthesis pathway is probably required to provide the energy required for rapid growth when fuel sources are limiting. It maintains mitochondrial function during periods of extracellular lipid starvation. Can also use acyl-CoA as donor: acts as a acyl-CoA:monoacylglycerol acyltransferase (MGAT), but also shows acyl-CoA:diacylglycerol acyltransferase (DGAT) activity. The polypeptide is DGAT1/2-independent enzyme synthesizing storage lipids (Mus musculus (Mouse)).